Here is a 475-residue protein sequence, read N- to C-terminus: Ribulose bisphosphate carboxylase large chain (475 aa).

Residues 1–2 (MS) constitute a propeptide that is removed on maturation. Pro3 bears the N-acetylproline mark. At Lys14 the chain carries N6,N6,N6-trimethyllysine. The substrate site is built by Asn123 and Thr173. Catalysis depends on Lys175, which acts as the Proton acceptor. Residue Lys177 participates in substrate binding. 3 residues coordinate Mg(2+): Lys201, Asp203, and Glu204. Lys201 carries the post-translational modification N6-carboxylysine. The Proton acceptor role is filled by His294. Substrate contacts are provided by Arg295, His327, and Ser379.

It belongs to the RuBisCO large chain family. Type I subfamily. As to quaternary structure, heterohexadecamer of 8 large chains and 8 small chains. Requires Mg(2+) as cofactor.

Its subcellular location is the plastid. The protein resides in the chloroplast. It catalyses the reaction 2 (2R)-3-phosphoglycerate + 2 H(+) = D-ribulose 1,5-bisphosphate + CO2 + H2O. It carries out the reaction D-ribulose 1,5-bisphosphate + O2 = 2-phosphoglycolate + (2R)-3-phosphoglycerate + 2 H(+). Its function is as follows. RuBisCO catalyzes two reactions: the carboxylation of D-ribulose 1,5-bisphosphate, the primary event in carbon dioxide fixation, as well as the oxidative fragmentation of the pentose substrate in the photorespiration process. Both reactions occur simultaneously and in competition at the same active site. This Bazzania trilobata (Greater whipwort) protein is Ribulose bisphosphate carboxylase large chain.